The following is an 89-amino-acid chain: Small ribosomal subunit protein bS20 (89 aa).

Residues 1–12 (MANHKSAIKRHR) are compositionally biased toward basic residues. Positions 1–26 (MANHKSAIKRHRQSVERAGRNRAART) are disordered.

This sequence belongs to the bacterial ribosomal protein bS20 family.

Binds directly to 16S ribosomal RNA. This chain is Small ribosomal subunit protein bS20, found in Desulfovibrio desulfuricans (strain ATCC 27774 / DSM 6949 / MB).